The chain runs to 145 residues: Putative pre-16S rRNA nuclease (145 aa).

This sequence belongs to the YqgF nuclease family.

The protein resides in the cytoplasm. Could be a nuclease involved in processing of the 5'-end of pre-16S rRNA. In Sulfurihydrogenibium sp. (strain YO3AOP1), this protein is Putative pre-16S rRNA nuclease.